Consider the following 457-residue polypeptide: Cysteine--tRNA ligase (457 aa).

C28 contacts Zn(2+). A 'HIGH' region motif is present at residues 30–40 (PTVYDTAHIGN). Zn(2+) is bound by residues C212, H237, and E241. Residues 270–274 (KMSKS) carry the 'KMSKS' region motif. An ATP-binding site is contributed by K273.

The protein belongs to the class-I aminoacyl-tRNA synthetase family. As to quaternary structure, monomer. Zn(2+) is required as a cofactor.

The protein resides in the cytoplasm. It catalyses the reaction tRNA(Cys) + L-cysteine + ATP = L-cysteinyl-tRNA(Cys) + AMP + diphosphate. This is Cysteine--tRNA ligase from Wolbachia pipientis wMel.